A 244-amino-acid chain; its full sequence is Na(+)-translocating NADH-quinone reductase subunit E (244 aa).

6 helical membrane passes run 11–31 (LLGI…TFLG), 50–70 (MSVA…HYFI), 90–110 (FLEL…LELL), 123–143 (GIFL…LFGI), 153–173 (VVFS…FATI), and 191–211 (ISFI…GIDI).

Belongs to the NqrDE/RnfAE family. Composed of six subunits; NqrA, NqrB, NqrC, NqrD, NqrE and NqrF.

Its subcellular location is the cell inner membrane. It catalyses the reaction a ubiquinone + n Na(+)(in) + NADH + H(+) = a ubiquinol + n Na(+)(out) + NAD(+). Its function is as follows. NQR complex catalyzes the reduction of ubiquinone-1 to ubiquinol by two successive reactions, coupled with the transport of Na(+) ions from the cytoplasm to the periplasm. NqrA to NqrE are probably involved in the second step, the conversion of ubisemiquinone to ubiquinol. The protein is Na(+)-translocating NADH-quinone reductase subunit E of Chlamydia trachomatis serovar L2 (strain ATCC VR-902B / DSM 19102 / 434/Bu).